The primary structure comprises 66 residues: MAKGKDIRVIVILECTGCDKKSVNKESTGISRYITKKNRQNTPSRLELRKFCPRCCKHTIHAEIKK.

It belongs to the bacterial ribosomal protein bL33 family.

The protein resides in the plastid. Its subcellular location is the chloroplast. The polypeptide is Large ribosomal subunit protein bL33c (Glycine max (Soybean)).